The primary structure comprises 369 residues: GTPase Obg (369 aa).

One can recognise an Obg domain in the interval 1–158 (MFTDVVELTV…RRIKLDLKLI (158 aa)). A disordered region spans residues 126–146 (NTHFKSSTNQRPTYAQPGEKG). Polar residues predominate over residues 128-138 (HFKSSTNQRPT). An OBG-type G domain is found at 159-362 (ADVGLVGFPN…LKHALFNLVQ (204 aa)). GTP contacts are provided by residues 165 to 172 (GFPNVGKS), 190 to 194 (FTTLT), 212 to 215 (DIPG), 280 to 283 (TRAD), and 343 to 345 (SSA). Ser172 and Thr192 together coordinate Mg(2+).

This sequence belongs to the TRAFAC class OBG-HflX-like GTPase superfamily. OBG GTPase family. As to quaternary structure, monomer. Mg(2+) is required as a cofactor.

The protein localises to the cytoplasm. Its function is as follows. An essential GTPase which binds GTP, GDP and possibly (p)ppGpp with moderate affinity, with high nucleotide exchange rates and a fairly low GTP hydrolysis rate. Plays a role in control of the cell cycle, stress response, ribosome biogenesis and in those bacteria that undergo differentiation, in morphogenesis control. This is GTPase Obg from Sulfurimonas denitrificans (strain ATCC 33889 / DSM 1251) (Thiomicrospira denitrificans (strain ATCC 33889 / DSM 1251)).